Reading from the N-terminus, the 232-residue chain is Probable dihydroorotate dehydrogenase B (NAD(+)), electron transfer subunit (232 aa).

The region spanning 1–86 (MYYTRITQIE…RGAFGSAFTP (86 aa)) is the FAD-binding FR-type domain. [2Fe-2S] cluster-binding residues include cysteine 202, cysteine 207, cysteine 210, and cysteine 219.

The protein belongs to the PyrK family. In terms of assembly, heterotetramer of 2 PyrK and 2 PyrD type B subunits. Requires [2Fe-2S] cluster as cofactor. The cofactor is FAD.

It participates in pyrimidine metabolism; UMP biosynthesis via de novo pathway; orotate from (S)-dihydroorotate (NAD(+) route): step 1/1. Its function is as follows. Responsible for channeling the electrons from the oxidation of dihydroorotate from the FMN redox center in the PyrD type B subunit to the ultimate electron acceptor NAD(+). The polypeptide is Probable dihydroorotate dehydrogenase B (NAD(+)), electron transfer subunit (Archaeoglobus fulgidus (strain ATCC 49558 / DSM 4304 / JCM 9628 / NBRC 100126 / VC-16)).